We begin with the raw amino-acid sequence, 110 residues long: Chagasin (110 aa).

Residues 29–34 (NPTTGF) carry the BC loop motif. Residues 59–68 (PPDSKLLGAG) carry the DE loop motif. The short motif at 91–100 (RPWTGPSHDS) is the FG loop element.

It belongs to the protease inhibitor I42 family. Interacts with cruzipain.

It is found in the flagellar pocket. It localises to the cytoplasmic vesicle. Its subcellular location is the cell surface. In terms of biological role, cysteine protease inhibitor. Inhibits cysteine protease cruzipain. The chain is Chagasin (cha) from Trypanosoma cruzi.